Reading from the N-terminus, the 179-residue chain is Crossover junction endodeoxyribonuclease RuvC (179 aa).

Residues Asp7, Glu67, and Asp139 contribute to the active site. Asp7, Glu67, and Asp139 together coordinate Mg(2+).

The protein belongs to the RuvC family. Homodimer which binds Holliday junction (HJ) DNA. The HJ becomes 2-fold symmetrical on binding to RuvC with unstacked arms; it has a different conformation from HJ DNA in complex with RuvA. In the full resolvosome a probable DNA-RuvA(4)-RuvB(12)-RuvC(2) complex forms which resolves the HJ. Mg(2+) serves as cofactor.

It localises to the cytoplasm. The catalysed reaction is Endonucleolytic cleavage at a junction such as a reciprocal single-stranded crossover between two homologous DNA duplexes (Holliday junction).. Functionally, the RuvA-RuvB-RuvC complex processes Holliday junction (HJ) DNA during genetic recombination and DNA repair. Endonuclease that resolves HJ intermediates. Cleaves cruciform DNA by making single-stranded nicks across the HJ at symmetrical positions within the homologous arms, yielding a 5'-phosphate and a 3'-hydroxyl group; requires a central core of homology in the junction. The consensus cleavage sequence is 5'-(A/T)TT(C/G)-3'. Cleavage occurs on the 3'-side of the TT dinucleotide at the point of strand exchange. HJ branch migration catalyzed by RuvA-RuvB allows RuvC to scan DNA until it finds its consensus sequence, where it cleaves and resolves the cruciform DNA. The polypeptide is Crossover junction endodeoxyribonuclease RuvC (Sorangium cellulosum (strain So ce56) (Polyangium cellulosum (strain So ce56))).